The primary structure comprises 67 residues: ORF2p protein (67 aa).

Residues 13–18 (WIGHPV) form an important for viral replication in intestinal cells region. A transmembrane helix spans residues 22-38 (AIIYPFVGFIPLSLKEV).

The protein localises to the host cytoplasmic vesicle membrane. Facilitates virus release from intestinal cells in vitro, possibly through the host autophagic pathway. The protein is ORF2p protein of Homo sapiens (Human).